Reading from the N-terminus, the 255-residue chain is Urease accessory protein UreD 1 (255 aa).

This sequence belongs to the UreD family. In terms of assembly, ureD, UreF and UreG form a complex that acts as a GTP-hydrolysis-dependent molecular chaperone, activating the urease apoprotein by helping to assemble the nickel containing metallocenter of UreC. The UreE protein probably delivers the nickel.

Its subcellular location is the cytoplasm. Required for maturation of urease via the functional incorporation of the urease nickel metallocenter. The chain is Urease accessory protein UreD 1 from Streptomyces griseus subsp. griseus (strain JCM 4626 / CBS 651.72 / NBRC 13350 / KCC S-0626 / ISP 5235).